The primary structure comprises 204 residues: High frequency lysogenization protein HflD homolog (204 aa).

This sequence belongs to the HflD family.

The protein localises to the cytoplasm. Its subcellular location is the cell inner membrane. The protein is High frequency lysogenization protein HflD homolog of Actinobacillus succinogenes (strain ATCC 55618 / DSM 22257 / CCUG 43843 / 130Z).